A 469-amino-acid polypeptide reads, in one-letter code: MADSASESDTDAAGGGPAAMQSSCSATSGGSGGGGGGKSGGIVISPFRLEELTNRLASLQQENKVLKIELETYKLKCKALQEENRDLRKASVTIQARAEQEEEFISNTLFKKIQALQKEKETLAVNYEKEEEFLTNELSRKLMQLQHEKAELEQHLEQEQEFQVNKLMKKIKKLENDTISKQLTLEQLRREKIDLENTLEQEQEALVNRLWKRMDKLEAEKRILQEKLDQPVSAPPSPRDISMEIDSPENMMRHIRFLKNEVERLKKQLRAAQLQHSEKMAQYLEEERHMREENLRLQRKLQREMERREALCRQLSESESSLEMDDERYFNEMSAQGLRPRTVSSPIPYTPSPSSSRPISPGLSYASHTVGFTPPTSLTRAGMSYYNSPGLHVQHMGASHGITRPSPRRSSSPDKFKRPTPPPSPNTQSPVQPPPPPPPPPMQPAVPSAAPTQPAPTQPQHPVHPSSQP.

The segment covering 1–10 (MADSASESDT) has biased composition (acidic residues). The tract at residues 1 to 37 (MADSASESDTDAAGGGPAAMQSSCSATSGGSGGGGGG) is disordered. N-acetylalanine is present on alanine 2. Residue serine 45 is modified to Phosphoserine. Residues 47 to 320 (FRLEELTNRL…LCRQLSESES (274 aa)) are a coiled coil. Repeat copies occupy residues 99–127 (EQEEEFISNTLFKKIQALQKEKETLAVNY), 128–156 (EKEEEFLTNELSRKLMQLQHEKAELEQHL), and 157–185 (EQEQEFQVNKLMKKIKKLENDTISKQLTL). The segment at 99 to 228 (EQEEEFISNT…AEKRILQEKL (130 aa)) is 5 X 29 AA tandem repeats. The 4; approximate repeat unit spans residues 186–199 (EQLRREKIDLENTL). Repeat unit 5 spans residues 200-228 (EQEQEALVNRLWKRMDKLEAEKRILQEKL). Phosphoserine is present on residues serine 233, serine 237, serine 242, serine 247, serine 277, and serine 316. The tract at residues 335-362 (AQGLRPRTVSSPIPYTPSPSSSRPISPG) is disordered. Position 342 is a phosphothreonine (threonine 342). Residues 344 to 361 (SSPIPYTPSPSSSRPISP) are compositionally biased toward low complexity. Phosphoserine is present on residues serine 356 and serine 360. Arginine 380 carries the post-translational modification Omega-N-methylarginine. 2 positions are modified to phosphoserine: serine 388 and serine 406. The disordered stretch occupies residues 394-469 (QHMGASHGIT…QHPVHPSSQP (76 aa)). Residues 419-444 (PTPPPSPNTQSPVQPPPPPPPPPMQP) are compositionally biased toward pro residues. An SH3-binding motif is present at residues 435–444 (PPPPPPPMQP). Low complexity predominate over residues 460–469 (QHPVHPSSQP).

Its subcellular location is the cytoplasm. The protein resides in the cytoskeleton. In Mus musculus (Mouse), this protein is Coiled-coil domain-containing protein 6 (Ccdc6).